Reading from the N-terminus, the 425-residue chain is Enolase (425 aa).

Gln-163 contacts (2R)-2-phosphoglycerate. The Proton donor role is filled by Glu-205. Residues Asp-242, Glu-285, and Asp-312 each contribute to the Mg(2+) site. Lys-337, Arg-366, Ser-367, and Lys-388 together coordinate (2R)-2-phosphoglycerate. Residue Lys-337 is the Proton acceptor of the active site.

This sequence belongs to the enolase family. Mg(2+) is required as a cofactor.

It is found in the cytoplasm. The protein resides in the secreted. Its subcellular location is the cell surface. The catalysed reaction is (2R)-2-phosphoglycerate = phosphoenolpyruvate + H2O. It participates in carbohydrate degradation; glycolysis; pyruvate from D-glyceraldehyde 3-phosphate: step 4/5. Functionally, catalyzes the reversible conversion of 2-phosphoglycerate (2-PG) into phosphoenolpyruvate (PEP). It is essential for the degradation of carbohydrates via glycolysis. This chain is Enolase, found in Cereibacter sphaeroides (strain ATCC 17029 / ATH 2.4.9) (Rhodobacter sphaeroides).